The primary structure comprises 335 residues: Methyltransferase pgmE (335 aa).

Belongs to the methyltransferase superfamily.

It functions in the pathway pigment biosynthesis. Its pathway is secondary metabolite biosynthesis. Its function is as follows. Methyltransferase; part of the gene cluster that mediates the biosynthesis of pleosporalin A, ascomycone A, as well as a third cryptic naphthoquinone derived pigment, all responsible for the coloration of conidia. Essential for the production of pleosporalin A, but not the 2 other final products. The pathway begins with the biosynthesis of the cyclized heptaketide 3-acetonyl-1,6,8-trihydroxy-2-naphthaldehyde by the NR-PKS pgmA. The C-6 hydroxyl group is further methylated by the O-methyltransferase pgmB to yield fusarubinaldehyde which is in turn oxidized by the cytochrome P450 monooxygenase pgmC at C-9. The C-1 hydroxyl group is then methylated spontaneously. Although pgmE, pgmD and pgmH are essential for the production of pleosporalin A, it is not the case for the 2 other final products and it remains difficult to assign a specific function to each enzyme. PgmF and pgmG seem not to be involved in pigment biosynthesis although they were regulated by the cluster-specific transcription factor pgmR. The protein is Methyltransferase pgmE of Aspergillus terreus.